The following is a 171-amino-acid chain: Sorcin (171 aa).

EF-hand domains are found at residues 3–38, 40–69, 70–105, and 106–140; these read MDTN…GLGT, LNIR…LGLF, KYVQ…FGYH, and LSPQ…LQTL. Ca(2+) contacts are provided by aspartate 16, aspartate 18, serine 20, serine 22, glutamate 27, aspartate 53, aspartate 55, asparagine 57, threonine 59, glutamate 64, aspartate 83, aspartate 85, serine 87, serine 89, and glutamate 94.

It is found in the cytoplasm. Its function is as follows. Calcium-binding protein. The protein is Sorcin of Schistosoma japonicum (Blood fluke).